The sequence spans 414 residues: Imidazolonepropionase (414 aa).

Residues H73 and H75 each coordinate Fe(3+). Residues H73 and H75 each contribute to the Zn(2+) site. Residues R82, Y145, and H178 each coordinate 4-imidazolone-5-propanoate. Y145 lines the N-formimidoyl-L-glutamate pocket. Fe(3+) is bound at residue H249. A Zn(2+)-binding site is contributed by H249. A 4-imidazolone-5-propanoate-binding site is contributed by Q252. Residue D324 participates in Fe(3+) binding. D324 lines the Zn(2+) pocket. 2 residues coordinate N-formimidoyl-L-glutamate: N326 and G328. S329 contacts 4-imidazolone-5-propanoate.

Belongs to the metallo-dependent hydrolases superfamily. HutI family. It depends on Zn(2+) as a cofactor. Fe(3+) is required as a cofactor.

The protein localises to the cytoplasm. It catalyses the reaction 4-imidazolone-5-propanoate + H2O = N-formimidoyl-L-glutamate. It participates in amino-acid degradation; L-histidine degradation into L-glutamate; N-formimidoyl-L-glutamate from L-histidine: step 3/3. Catalyzes the hydrolytic cleavage of the carbon-nitrogen bond in imidazolone-5-propanoate to yield N-formimidoyl-L-glutamate. It is the third step in the universal histidine degradation pathway. In Shewanella pealeana (strain ATCC 700345 / ANG-SQ1), this protein is Imidazolonepropionase.